The primary structure comprises 391 residues: Chaperone protein DnaJ (391 aa).

The 66-residue stretch at 2 to 67 folds into the J domain; sequence DYYDVLGVSK…QKRESYDRYG (66 aa). The CR-type zinc finger occupies 148 to 226; sequence GVEKELLVSG…CRGQGRVKDK (79 aa). Cys161, Cys164, Cys178, Cys181, Cys200, Cys203, Cys214, and Cys217 together coordinate Zn(2+). CXXCXGXG motif repeat units follow at residues 161–168, 178–185, 200–207, and 214–221; these read CTTCSGSG, CERCKGSG, CPECGGEG, and CSNCRGQG.

Belongs to the DnaJ family. As to quaternary structure, homodimer. Zn(2+) is required as a cofactor.

It localises to the cytoplasm. Participates actively in the response to hyperosmotic and heat shock by preventing the aggregation of stress-denatured proteins and by disaggregating proteins, also in an autonomous, DnaK-independent fashion. Unfolded proteins bind initially to DnaJ; upon interaction with the DnaJ-bound protein, DnaK hydrolyzes its bound ATP, resulting in the formation of a stable complex. GrpE releases ADP from DnaK; ATP binding to DnaK triggers the release of the substrate protein, thus completing the reaction cycle. Several rounds of ATP-dependent interactions between DnaJ, DnaK and GrpE are required for fully efficient folding. Also involved, together with DnaK and GrpE, in the DNA replication of plasmids through activation of initiation proteins. The protein is Chaperone protein DnaJ of Chlamydia felis (strain Fe/C-56) (Chlamydophila felis).